The primary structure comprises 291 residues: uncharacterized protein (291 aa).

Positions 68–205 (PVAVSASFLW…VIQLWARPRG (138 aa)) constitute a DAGKc domain.

This is an uncharacterized protein from Mycobacterium tuberculosis (strain CDC 1551 / Oshkosh).